Here is a 601-residue protein sequence, read N- to C-terminus: HIRA-interacting protein 3 (601 aa).

Disordered stretches follow at residues 60–469 (KMQA…EDHP) and 546–601 (STGR…GDSS). A compositionally biased stretch (basic and acidic residues) spans 66 to 76 (GTREGKPDFIK). Residues serine 85, serine 96, and serine 98 each carry the phosphoserine modification. Over residues 97–113 (ESESSSSPSSPDGSGPS) the composition is skewed to low complexity. Basic residues predominate over residues 117 to 129 (RTTKKTCLRRALK). The segment covering 130 to 149 (KAVESTDEDHQTDLDAKMGL) has biased composition (basic and acidic residues). The residue at position 134 (serine 134) is a Phosphoserine. Phosphothreonine occurs at positions 135 and 141. Serine 152, serine 153, and serine 163 each carry phosphoserine. Threonine 167 carries the phosphothreonine modification. Positions 186–205 (GAKDKQVPLKADRKQVREES) are enriched in basic and acidic residues. Residues serine 205, serine 207, serine 208, serine 231, serine 234, serine 238, serine 313, serine 359, serine 360, serine 384, and serine 389 each carry the phosphoserine modification. Basic and acidic residues-rich tracts occupy residues 238–264 (SPAK…ERKS) and 313–324 (SSEKGEAEKEEG). Positions 347 to 378 (RTQTESGRRQNTSSRDDSNSTQEQAAAQGTTK) are enriched in polar residues. Low complexity predominate over residues 379 to 388 (SGSLGSSNGD). The residue at position 391 (threonine 391) is a Phosphothreonine. Phosphoserine is present on residues serine 396 and serine 398. A compositionally biased stretch (low complexity) spans 413 to 432 (SNKSSKNGQARSCSSSSDSS). The segment at 429–572 (SDSSPEPTGQ…TSPGETYRRT (144 aa)) is interaction with the histone H2A-H2B complex. Over residues 556–566 (WNPSGEGTSPG) the composition is skewed to polar residues. Residues serine 564, serine 575, serine 595, serine 596, and serine 600 each carry the phosphoserine modification. Over residues 568 to 580 (TYRRTLDSEEEQP) the composition is skewed to basic and acidic residues.

Interacts (via C-terminus) with histone H2A-H2B dimers; the interaction is direct. Interacts with HIRA. Interacts with CK2. In terms of processing, phosphorylated by CK2.

It localises to the nucleus. Functionally, histone chaperone that carries a H2A-H2B histone complex and facilitates its deposition onto chromatin. The protein is HIRA-interacting protein 3 of Mus musculus (Mouse).